Reading from the N-terminus, the 55-residue chain is Small ribosomal subunit protein bS21 (55 aa).

Belongs to the bacterial ribosomal protein bS21 family.

The chain is Small ribosomal subunit protein bS21 from Phytoplasma mali (strain AT).